The primary structure comprises 113 residues: Hydrogenase maturation factor HybF (113 aa).

Ni(2+) is bound by residues His2 and Glu3. Cys73, Cys76, Cys89, and Cys92 together coordinate Zn(2+).

The protein belongs to the HypA/HybF family. HybF subfamily.

Involved in the maturation of [NiFe] hydrogenases. Required for nickel insertion into the metal center of the hydrogenase. The chain is Hydrogenase maturation factor HybF from Escherichia coli O6:H1 (strain CFT073 / ATCC 700928 / UPEC).